The following is a 341-amino-acid chain: Malate dehydrogenase, mitochondrial (341 aa).

Residues 35-41 (GAAGGIG) and Asp-61 contribute to the NAD(+) site. 2 residues coordinate substrate: Arg-108 and Arg-114. NAD(+) contacts are provided by residues Asn-121 and 144–146 (ITN). Asn-146 and Arg-180 together coordinate substrate. His-204 functions as the Proton acceptor in the catalytic mechanism. Met-255 provides a ligand contact to NAD(+).

Belongs to the LDH/MDH superfamily. MDH type 1 family. Homodimer.

The protein localises to the mitochondrion matrix. It carries out the reaction (S)-malate + NAD(+) = oxaloacetate + NADH + H(+). Its function is as follows. Catalyzes the reversible conversion of (S)-malate to oxaloacetate in the citric acid cycle. The protein is Malate dehydrogenase, mitochondrial of Caenorhabditis elegans.